The sequence spans 266 residues: MKCKFVFCLSFLVLAITNANIFLRNEADLEEKTLRIPKALTTMGVIKPDMKIKLKMEGNVNGHAFVIEGEGEGKPYDGTHTLNLEVKEGAPLPFSYDILSNAFQYGNRALTKYPDDIADYFKQSFPEGYSWERTMTFEDKGIVKVKSDISMEEDSFIYEIRFDGMNFPPNGPVMQKKTLKWEPSTEIMYVRDGVLVGDISHSLLLEGGGHYRCDFKSIYKAKKVVKLPDYHFVDHRIEILNHDKDYNKVTLYENAVARYSLLPSQA.

The 2-iminomethyl-5-imidazolinone (Gln-Gly) cross-link spans 104–106 (QYG). Tyr105 carries the 2,3-didehydrotyrosine modification.

This sequence belongs to the GFP family. Contains a chromophore consisting of modified amino acid residues. The chromophore is formed by autocatalytic backbone condensation between Xaa-N and Gly-(N+2), oxidation of Tyr-(N+1) to didehydrotyrosine, and formation of a double bond to the alpha-amino nitrogen of residue Xaa-N. Maturation of the chromophore requires nothing other than molecular oxygen. The precise stereochemistry of the tyrosine has not been determined. In terms of tissue distribution, tentacle and oral disk.

In terms of biological role, pigment protein that is green in color. This Clavularia sp. (Brown star polyp) protein is GFP-like fluorescent chromoprotein cFP484.